The following is a 353-amino-acid chain: Photosystem II protein D1 (353 aa).

An N-acetylthreonine modification is found at T2. Position 2 is a phosphothreonine (T2). Transmembrane regions (helical) follow at residues 29 to 46 (YIGW…TATS), 118 to 133 (HFLL…EWEL), and 142 to 156 (WIAV…AATA). H118 contacts chlorophyll a. Y126 is a pheophytin a binding site. D170 and E189 together coordinate [CaMn4O5] cluster. Residues 197–218 (FHMLGVAGVFGGSLFSAMHGSL) form a helical membrane-spanning segment. Position 198 (H198) interacts with chlorophyll a. A quinone contacts are provided by residues H215 and 264–265 (SF). Fe cation is bound at residue H215. H272 is a Fe cation binding site. A helical transmembrane segment spans residues 274-288 (FLAAWPVVGIWFTAL). The [CaMn4O5] cluster site is built by H332, E333, D342, and A344. The propeptide occupies 345–353 (AVEAPSTNG).

It belongs to the reaction center PufL/M/PsbA/D family. In terms of assembly, PSII is composed of 1 copy each of membrane proteins PsbA, PsbB, PsbC, PsbD, PsbE, PsbF, PsbH, PsbI, PsbJ, PsbK, PsbL, PsbM, PsbT, PsbX, PsbY, PsbZ, Psb30/Ycf12, at least 3 peripheral proteins of the oxygen-evolving complex and a large number of cofactors. It forms dimeric complexes. It depends on The D1/D2 heterodimer binds P680, chlorophylls that are the primary electron donor of PSII, and subsequent electron acceptors. It shares a non-heme iron and each subunit binds pheophytin, quinone, additional chlorophylls, carotenoids and lipids. D1 provides most of the ligands for the Mn4-Ca-O5 cluster of the oxygen-evolving complex (OEC). There is also a Cl(-1) ion associated with D1 and D2, which is required for oxygen evolution. The PSII complex binds additional chlorophylls, carotenoids and specific lipids. as a cofactor. In terms of processing, tyr-161 forms a radical intermediate that is referred to as redox-active TyrZ, YZ or Y-Z. C-terminally processed by CTPA; processing is essential to allow assembly of the oxygen-evolving complex and thus photosynthetic growth.

Its subcellular location is the plastid. The protein localises to the chloroplast thylakoid membrane. It carries out the reaction 2 a plastoquinone + 4 hnu + 2 H2O = 2 a plastoquinol + O2. In terms of biological role, photosystem II (PSII) is a light-driven water:plastoquinone oxidoreductase that uses light energy to abstract electrons from H(2)O, generating O(2) and a proton gradient subsequently used for ATP formation. It consists of a core antenna complex that captures photons, and an electron transfer chain that converts photonic excitation into a charge separation. The D1/D2 (PsbA/PsbD) reaction center heterodimer binds P680, the primary electron donor of PSII as well as several subsequent electron acceptors. The polypeptide is Photosystem II protein D1 (Oenothera parviflora (Small-flowered evening primrose)).